Here is a 136-residue protein sequence, read N- to C-terminus: Large ribosomal subunit protein uL16 (136 aa).

It belongs to the universal ribosomal protein uL16 family. In terms of assembly, part of the 50S ribosomal subunit.

In terms of biological role, binds 23S rRNA and is also seen to make contacts with the A and possibly P site tRNAs. This is Large ribosomal subunit protein uL16 from Glaesserella parasuis serovar 5 (strain SH0165) (Haemophilus parasuis).